A 257-amino-acid polypeptide reads, in one-letter code: Glucose-1-phosphate cytidylyltransferase (257 aa).

Substrate-binding positions include 6 to 10, 11 to 13, Lys-23, Ser-104, Arg-109, and Gly-128; these read LAGGL and GTR. The Mg(2+) site is built by Asp-129 and Asp-234.

The protein belongs to the glucose-1-phosphate cytidylyltransferase family. In terms of assembly, homohexamer. Mg(2+) serves as cofactor.

The catalysed reaction is alpha-D-glucose 1-phosphate + CTP + H(+) = CDP-D-glucose + diphosphate. The protein operates within nucleotide-sugar biosynthesis; CDP-3,6-dideoxy-D-mannose biosynthesis; CDP-3,6-dideoxy-D-mannose from CTP and alpha-D-glucose 1-phosphate: step 1/5. Its pathway is bacterial outer membrane biogenesis; LPS O-antigen biosynthesis. Its function is as follows. Involved in the biosynthesis of the tyvelose, a 3,6-dideoxyhexose found in the O-antigen of the surface lipopolysaccharides. It catalyzes the transfer of a CMP moiety from CTP to glucose 1-phosphate. This enzyme can utilize either CTP or UTP as the nucleotide donor. In Salmonella typhi, this protein is Glucose-1-phosphate cytidylyltransferase (rfbF).